A 592-amino-acid chain; its full sequence is Aspartate--tRNA(Asp/Asn) ligase (592 aa).

Glu176 provides a ligand contact to L-aspartate. Residues 200–203 (QLYK) form an aspartate region. Arg222 provides a ligand contact to L-aspartate. Residues 222-224 (RDE) and Gln231 contribute to the ATP site. An L-aspartate-binding site is contributed by His452. Glu486 contributes to the ATP binding site. Arg493 serves as a coordination point for L-aspartate. 538 to 541 (GVDR) is a binding site for ATP.

This sequence belongs to the class-II aminoacyl-tRNA synthetase family. Type 1 subfamily. Homodimer.

The protein localises to the cytoplasm. It carries out the reaction tRNA(Asx) + L-aspartate + ATP = L-aspartyl-tRNA(Asx) + AMP + diphosphate. In terms of biological role, aspartyl-tRNA synthetase with relaxed tRNA specificity since it is able to aspartylate not only its cognate tRNA(Asp) but also tRNA(Asn). Reaction proceeds in two steps: L-aspartate is first activated by ATP to form Asp-AMP and then transferred to the acceptor end of tRNA(Asp/Asn). The protein is Aspartate--tRNA(Asp/Asn) ligase of Rhodopirellula baltica (strain DSM 10527 / NCIMB 13988 / SH1).